A 345-amino-acid chain; its full sequence is DNA N(6)-methyladenine demethylase ALKBH1A (345 aa).

Substrate contacts are provided by residues W179 and 186–188 (FDW). The Fe2OG dioxygenase domain occupies 225-345 (RPEGAIVNYF…RININIRQVF (121 aa)). 232-234 (NYF) contacts 2-oxoglutarate. Fe cation is bound by residues H243, D245, and H299. A 2-oxoglutarate-binding site is contributed by 336-342 (RININIR).

Belongs to the alkB family. The cofactor is Fe(2+). Mostly expressed in siliques, to a lower extent in roots, seedlings and rosette leaves, but barely in cauline leaves, stems and flowers.

It is found in the nucleus. The protein localises to the cytoplasm. The catalysed reaction is an N(6)-methyl-2'-deoxyadenosine in DNA + 2-oxoglutarate + O2 = a 2'-deoxyadenosine in DNA + formaldehyde + succinate + CO2. In terms of biological role, dioxygenase that catalyzes DNA N(6)-methyladenine (6 mA) demethylation to modulate gene expression and regulate seed germination. This Arabidopsis thaliana (Mouse-ear cress) protein is DNA N(6)-methyladenine demethylase ALKBH1A.